The chain runs to 98 residues: MAPKKTTKKGGPQKRPSAEKRILTAQKRYLINQSFKSKAKTMMKKFEAALKAGDQSSITSGLQLVYSVADKAVKRGIFKNNKAARIKSRATLRANVKI.

The span at 1–12 shows a compositional bias: basic residues; that stretch reads MAPKKTTKKGGP. The segment at 1 to 20 is disordered; the sequence is MAPKKTTKKGGPQKRPSAEK.

This sequence belongs to the bacterial ribosomal protein bS20 family.

Binds directly to 16S ribosomal RNA. This chain is Small ribosomal subunit protein bS20, found in Chlamydia caviae (strain ATCC VR-813 / DSM 19441 / 03DC25 / GPIC) (Chlamydophila caviae).